Here is a 211-residue protein sequence, read N- to C-terminus: Putative ankyrin repeat protein R810 (211 aa).

5 ANK repeats span residues 31-61, 72-101, 103-131, 133-162, and 163-191; these read TKFI…NLKY, NIND…DICA, QNSP…KFFG, YSSA…FCLE, and MEIA…SYFD.

The protein is Putative ankyrin repeat protein R810 of Acanthamoeba polyphaga mimivirus (APMV).